A 193-amino-acid polypeptide reads, in one-letter code: Peptidyl-tRNA hydrolase (193 aa).

Tyr16 is a tRNA binding site. His21 serves as the catalytic Proton acceptor. TRNA-binding residues include Tyr66, Asn68, and Asn114.

The protein belongs to the PTH family. In terms of assembly, monomer.

The protein resides in the cytoplasm. The enzyme catalyses an N-acyl-L-alpha-aminoacyl-tRNA + H2O = an N-acyl-L-amino acid + a tRNA + H(+). Hydrolyzes ribosome-free peptidyl-tRNAs (with 1 or more amino acids incorporated), which drop off the ribosome during protein synthesis, or as a result of ribosome stalling. In terms of biological role, catalyzes the release of premature peptidyl moieties from peptidyl-tRNA molecules trapped in stalled 50S ribosomal subunits, and thus maintains levels of free tRNAs and 50S ribosomes. The sequence is that of Peptidyl-tRNA hydrolase from Geobacter sulfurreducens (strain ATCC 51573 / DSM 12127 / PCA).